A 156-amino-acid chain; its full sequence is 6,7-dimethyl-8-ribityllumazine synthase (156 aa).

Residues F22, 57-59 (AVE), and 81-83 (SVI) each bind 5-amino-6-(D-ribitylamino)uracil. 86 to 87 (GT) is a (2S)-2-hydroxy-3-oxobutyl phosphate binding site. The Proton donor role is filled by H89. 5-amino-6-(D-ribitylamino)uracil is bound at residue F114. R128 contacts (2S)-2-hydroxy-3-oxobutyl phosphate.

The protein belongs to the DMRL synthase family. In terms of assembly, forms an icosahedral capsid composed of 60 subunits, arranged as a dodecamer of pentamers.

It catalyses the reaction (2S)-2-hydroxy-3-oxobutyl phosphate + 5-amino-6-(D-ribitylamino)uracil = 6,7-dimethyl-8-(1-D-ribityl)lumazine + phosphate + 2 H2O + H(+). It participates in cofactor biosynthesis; riboflavin biosynthesis; riboflavin from 2-hydroxy-3-oxobutyl phosphate and 5-amino-6-(D-ribitylamino)uracil: step 1/2. Functionally, catalyzes the formation of 6,7-dimethyl-8-ribityllumazine by condensation of 5-amino-6-(D-ribitylamino)uracil with 3,4-dihydroxy-2-butanone 4-phosphate. This is the penultimate step in the biosynthesis of riboflavin. The chain is 6,7-dimethyl-8-ribityllumazine synthase from Aliivibrio fischeri (strain ATCC 700601 / ES114) (Vibrio fischeri).